The primary structure comprises 391 residues: Decapping nuclease RAI1 (391 aa).

E174 provides a ligand contact to a divalent metal cation. Position 223 (E223) interacts with substrate. A divalent metal cation-binding residues include D225, E244, and L245. Substrate is bound by residues K246 and Q270.

Belongs to the DXO/Dom3Z family. As to quaternary structure, interacts with RAT1; the interaction is direct, stabilizes RAT1 protein structure and stimulates its exoribonuclease activity. The interaction also stimulates RAI1 pyrophosphohydrolase activity, probably by recruiting it to mRNA substrates. It depends on a divalent metal cation as a cofactor.

Its subcellular location is the nucleus. It catalyses the reaction a 5'-end NAD(+)-phospho-ribonucleoside in mRNA + H2O = a 5'-end phospho-ribonucleoside in mRNA + NAD(+) + H(+). The enzyme catalyses a 5'-end (N(7)-methyl 5'-triphosphoguanosine)-ribonucleoside-ribonucleotide in mRNA + H2O = a (N(7)-methyl 5'-triphosphoguanosine)-nucleoside + a 5'-end phospho-ribonucleoside in mRNA + H(+). It carries out the reaction a 5'-end triphospho-ribonucleoside in mRNA + H2O = a 5'-end phospho-ribonucleoside in mRNA + diphosphate + H(+). Functionally, decapping enzyme for NAD-capped RNAs: specifically hydrolyzes the nicotinamide adenine dinucleotide (NAD) cap from a subset of RNAs by removing the entire NAD moiety from the 5'-end of an NAD-capped RNA. The NAD-cap is present at the 5'-end of some RNAs and snoRNAs. In contrast to the canonical 5'-end N7 methylguanosine (m7G) cap, the NAD cap promotes mRNA decay. Also acts as a non-canonical decapping enzyme that removes the entire cap structure of m7G capped or incompletely capped RNAs. Has decapping activity toward incomplete 5'-end m7G cap mRNAs such as unmethylated 5'-end-capped RNA (cap0), while it has no activity toward 2'-O-ribose methylated m7G cap (cap1). Also possesses RNA 5'-pyrophosphohydrolase activity by hydrolyzing the 5'-end triphosphate to release pyrophosphates. Stimulates exoribonuclease activity of Rat1, allowing it to degrade RNAs with stable secondary structure more effectively. The sequence is that of Decapping nuclease RAI1 from Candida albicans (strain SC5314 / ATCC MYA-2876) (Yeast).